Reading from the N-terminus, the 397-residue chain is 1-deoxy-D-xylulose 5-phosphate reductoisomerase (397 aa).

NADPH is bound by residues threonine 10, glycine 11, serine 12, isoleucine 13, glutamine 38, and asparagine 123. Lysine 124 contributes to the 1-deoxy-D-xylulose 5-phosphate binding site. Glutamate 125 provides a ligand contact to NADPH. Aspartate 149 serves as a coordination point for Mn(2+). 1-deoxy-D-xylulose 5-phosphate contacts are provided by serine 150, glutamate 151, serine 185, and histidine 208. Glutamate 151 lines the Mn(2+) pocket. Glycine 214 contacts NADPH. Serine 221, asparagine 226, lysine 227, and glutamate 230 together coordinate 1-deoxy-D-xylulose 5-phosphate. Glutamate 230 lines the Mn(2+) pocket.

This sequence belongs to the DXR family. Mg(2+) serves as cofactor. Requires Mn(2+) as cofactor.

The catalysed reaction is 2-C-methyl-D-erythritol 4-phosphate + NADP(+) = 1-deoxy-D-xylulose 5-phosphate + NADPH + H(+). Its pathway is isoprenoid biosynthesis; isopentenyl diphosphate biosynthesis via DXP pathway; isopentenyl diphosphate from 1-deoxy-D-xylulose 5-phosphate: step 1/6. Its function is as follows. Catalyzes the NADPH-dependent rearrangement and reduction of 1-deoxy-D-xylulose-5-phosphate (DXP) to 2-C-methyl-D-erythritol 4-phosphate (MEP). This chain is 1-deoxy-D-xylulose 5-phosphate reductoisomerase, found in Idiomarina loihiensis (strain ATCC BAA-735 / DSM 15497 / L2-TR).